The primary structure comprises 214 residues: Outer-membrane lipoprotein LolB (214 aa).

Residues 1-30 (MKHVSSPHPCAAIASARVWLGLVLVALLAG) form the signal peptide. Cys-31 carries N-palmitoyl cysteine lipidation. Cys-31 carries S-diacylglycerol cysteine lipidation.

The protein belongs to the LolB family. As to quaternary structure, monomer.

It localises to the cell outer membrane. In terms of biological role, plays a critical role in the incorporation of lipoproteins in the outer membrane after they are released by the LolA protein. This chain is Outer-membrane lipoprotein LolB, found in Chromohalobacter salexigens (strain ATCC BAA-138 / DSM 3043 / CIP 106854 / NCIMB 13768 / 1H11).